Here is a 136-residue protein sequence, read N- to C-terminus: Mini-ribonuclease 3 (136 aa).

Asp-20 is a catalytic residue.

The protein belongs to the MrnC RNase family. Homodimer. Requires Mg(2+) as cofactor.

The protein localises to the cytoplasm. Involved in correct processing of both the 5' and 3' ends of 23S rRNA precursor. Processes 30S rRNA precursor transcript even in absence of ribonuclease 3 (Rnc); Rnc processes 30S rRNA into smaller rRNA precursors. The polypeptide is Mini-ribonuclease 3 (Listeria monocytogenes serovar 1/2a (strain ATCC BAA-679 / EGD-e)).